A 414-amino-acid polypeptide reads, in one-letter code: Putative transporter YoaB (414 aa).

Topologically, residues 1 to 11 (MLDKIGIPKRL) are cytoplasmic. The helical transmembrane segment at 12–32 (AWGFLGVVLFMMGDGLEQGWL) threads the bilayer. At 33–47 (SPFLIENGLTVQQSA) the chain is on the extracellular side. The helical transmembrane segment at 48 to 68 (SIFSIYGIALAIASWFSGVCL) threads the bilayer. The Cytoplasmic portion of the chain corresponds to 69 to 75 (EAFGAKR). A helical transmembrane segment spans residues 76–96 (TMFMGLLFYVIGTAAFIVFGF). Topologically, residues 97–107 (EQLNLPVMYVT) are extracellular. The chain crosses the membrane as a helical span at residues 108-128 (YFVKGLGYPLFAYSFLTWVIY). Residues 129–136 (RTPQSKLS) are Cytoplasmic-facing. A helical membrane pass occupies residues 137–157 (TAVGWFWIAYCLGMFVFGAWY). The Extracellular portion of the chain corresponds to 158–167 (SSYAIKAFGY). A helical membrane pass occupies residues 168 to 188 (LNTLWSSIFWVCLGAFFALFI). Residues 189–219 (NKDRFEKKKRKRSETAEELLKGVTILFTNPR) are Cytoplasmic-facing. A helical transmembrane segment spans residues 220–240 (VLTGGIIRIINSIGTYGFPVF). The Extracellular portion of the chain corresponds to 241 to 255 (LPMHMAQHGISTNVW). A helical membrane pass occupies residues 256-276 (LQIWGTIFLGNIVFNLIFGIV). At 277–286 (GDKFGWKNTV) the chain is on the cytoplasmic side. A helical transmembrane segment spans residues 287 to 307 (IWFGGVGCGIFTVLLYYAPVF). Residues 308-316 (SGGSLAVVS) lie on the Extracellular side of the membrane. Residues 317–337 (VIGFIWGGLLAGYVPIGAIVP) form a helical membrane-spanning segment. The Cytoplasmic segment spans residues 338–343 (TVAGKD). Residues 344–364 (KGAAMSVLNLAAGLSAFVGPA) form a helical membrane-spanning segment. At 365-375 (LAWLFIGLVGA) the chain is on the extracellular side. Residues 376–398 (QGVVWIFAALYLASAVLTKCIHI) form a helical membrane-spanning segment. Over 399–414 (PEEKAVKEETSPQYAS) the chain is Cytoplasmic.

The protein belongs to the major facilitator superfamily. Sugar transporter (TC 2.A.1.1) family. CsbX subfamily.

The protein resides in the cell membrane. The protein is Putative transporter YoaB (yoaB) of Bacillus subtilis (strain 168).